Consider the following 102-residue polypeptide: 10 kDa heat shock protein, mitochondrial (102 aa).

Position 2 is an N-acetylalanine (Ala-2). An N6-acetyllysine modification is found at Lys-8. Lys-28 is subject to N6-succinyllysine. Lys-40 carries the post-translational modification N6-acetyllysine; alternate. Residues Lys-40, Lys-54, and Lys-56 each carry the N6-malonyllysine; alternate modification. Residues Lys-40, Lys-54, Lys-56, Lys-66, and Lys-70 each carry the N6-succinyllysine; alternate modification. N6-acetyllysine; alternate is present on residues Lys-56, Lys-66, and Lys-70. Thr-79 is subject to Phosphothreonine. Residues Lys-80 and Lys-86 each carry the N6-acetyllysine; alternate modification. Residues Lys-80 and Lys-86 each carry the N6-succinyllysine; alternate modification. Lys-99 carries the post-translational modification N6-acetyllysine.

The protein belongs to the GroES chaperonin family. In terms of assembly, homoheptamer arranged in a ring structure. 2 heptameric Hsp10 rings interact with a Hsp60 tetradecamer in the structure of a back-to-back double heptameric ring to form the symmetrical football complex.

Its subcellular location is the mitochondrion matrix. In terms of biological role, co-chaperonin implicated in mitochondrial protein import and macromolecular assembly. Together with Hsp60, facilitates the correct folding of imported proteins. May also prevent misfolding and promote the refolding and proper assembly of unfolded polypeptides generated under stress conditions in the mitochondrial matrix. The functional units of these chaperonins consist of heptameric rings of the large subunit Hsp60, which function as a back-to-back double ring. In a cyclic reaction, Hsp60 ring complexes bind one unfolded substrate protein per ring, followed by the binding of ATP and association with 2 heptameric rings of the co-chaperonin Hsp10. This leads to sequestration of the substrate protein in the inner cavity of Hsp60 where, for a certain period of time, it can fold undisturbed by other cell components. Synchronous hydrolysis of ATP in all Hsp60 subunits results in the dissociation of the chaperonin rings and the release of ADP and the folded substrate protein. This Rattus norvegicus (Rat) protein is 10 kDa heat shock protein, mitochondrial (Hspe1).